A 608-amino-acid polypeptide reads, in one-letter code: Afamin (608 aa).

The N-terminal stretch at 1–21 is a signal peptide; that stretch reads MRHLKLTGFIFFLLSLTESLA. 3 Albumin domains span residues 22-210, 211-403, and 404-599; these read LPTK…APIT, QYLK…KFNE, and TTER…KTGD. N33 carries an N-linked (GlcNAc...) asparagine glycan. Cystine bridges form between C77–C86, C99–C114, C113–C124, C148–C193, C224–C270, C269–C277, C289–C303, C302–C313, C340–C385, and C384–C393. N109 carries an N-linked (GlcNAc...) asparagine glycan. An N-linked (GlcNAc...) asparagine glycan is attached at N153. A binding pocket for hydrophobic ligands region spans residues 215–319; that stretch reads ALSSYQRNVC…RADCIINANK (105 aa). N-linked (GlcNAc...) asparagine glycosylation occurs at N402. Disulfide bonds link C416-C462, C461-C470, C483-C499, C498-C509, and C580-C589. A glycan (N-linked (GlcNAc...) asparagine) is linked at N488. The segment at 585 to 608 is disordered; sequence KPEACFSPESSKTGDVSQDAEKQR.

Belongs to the ALB/AFP/VDB family. As to quaternary structure, forms a 1:1 complex with Wnt family members; interacts with WNT1, WNT2B, WNT3, WNT3A, WNT5A, WNT7A, WNT7B, WNT8, WNT9A, WNT9B, WNT10A and WNT10B. Post-translationally, N-glycosylated; more than 90% of the glycans are sialylated.

Its subcellular location is the secreted. In terms of biological role, functions as a carrier for hydrophobic molecules in body fluids. Essential for the solubility and activity of lipidated Wnt family members, including WNT1, WNT2B, WNT3, WNT3A, WNT5A, WNT7A, WNT7B, WNT8, WNT9A, WNT9B, WNT10A and WNT10B. Binds vitamin E. May transport vitamin E in body fluids under conditions where the lipoprotein system is not sufficient. May be involved in the transport of vitamin E across the blood-brain barrier. This is Afamin (Afm) from Rattus norvegicus (Rat).